Here is a 471-residue protein sequence, read N- to C-terminus: Meiosis-specific with OB domain-containing protein (471 aa).

The segment at residues 167-272 is a DNA-binding region (OB); sequence IINVLAAVKS…EANILLNFIR (106 aa).

This sequence belongs to the MEIOB family. As to quaternary structure, component of a multiprotein complex with RPA2 and SPATA22. Interacts with SPATA22. Interacts with the complex BRME1:HSF2BP:BRCA2.

It localises to the cytoplasm. Its subcellular location is the nucleus. It is found in the chromosome. In terms of biological role, single-stranded DNA-binding protein required for homologous recombination in meiosis I. Required for double strand breaks (DSBs) repair and crossover formation and promotion of faithful and complete synapsis. Not required for the initial loading of recombinases but required to maintain a proper number of RAD51 and DMC1 foci after the zygotene stage. May act by ensuring the stabilization of recombinases, which is required for successful homology search and meiotic recombination. Displays Single-stranded DNA 3'-5' exonuclease activity in vitro. This is Meiosis-specific with OB domain-containing protein (MEIOB) from Macaca fascicularis (Crab-eating macaque).